A 220-amino-acid chain; its full sequence is Iron-sulfur cluster repair protein YtfE (220 aa).

This sequence belongs to the RIC family. YtfE subfamily. In terms of assembly, homodimer.

The protein resides in the cytoplasm. Functionally, di-iron-containing protein involved in the repair of iron-sulfur clusters damaged by oxidative and nitrosative stress conditions. This chain is Iron-sulfur cluster repair protein YtfE, found in Shigella boydii serotype 4 (strain Sb227).